The chain runs to 412 residues: Type II methyltransferase M.Sau3AI (412 aa).

The SAM-dependent MTase C5-type domain maps to 4–402; the sequence is IKVVELFAGV…NQIEKIDSIT (399 aa). The active site involves Cys85.

Belongs to the class I-like SAM-binding methyltransferase superfamily. C5-methyltransferase family.

The enzyme catalyses a 2'-deoxycytidine in DNA + S-adenosyl-L-methionine = a 5-methyl-2'-deoxycytidine in DNA + S-adenosyl-L-homocysteine + H(+). Functionally, a methylase that recognizes the double-stranded sequence 5'-GATC-3', methylates C-4 on both strands and protects the DNA from cleavage by the Sau3AI endonuclease. This is Type II methyltransferase M.Sau3AI (sau3AIM) from Staphylococcus aureus.